We begin with the raw amino-acid sequence, 182 residues long: uncharacterized protein (182 aa).

2 helical membrane passes run 76-96 and 114-130; these read LLLAMSTLKICPLNLVFLALA and LDLLFVSLTTTACLIGA.

It localises to the membrane. This is an uncharacterized protein from Saccharomyces cerevisiae (strain ATCC 204508 / S288c) (Baker's yeast).